The following is a 409-amino-acid chain: Peptidase T (409 aa).

His-78 lines the Zn(2+) pocket. Asp-80 is a catalytic residue. Asp-140 provides a ligand contact to Zn(2+). Glu-174 (proton acceptor) is an active-site residue. Positions 175, 197, and 379 each coordinate Zn(2+).

It belongs to the peptidase M20B family. Zn(2+) serves as cofactor.

The protein resides in the cytoplasm. The enzyme catalyses Release of the N-terminal residue from a tripeptide.. Its function is as follows. Cleaves the N-terminal amino acid of tripeptides. The chain is Peptidase T from Aliivibrio salmonicida (strain LFI1238) (Vibrio salmonicida (strain LFI1238)).